The chain runs to 401 residues: NADH-dependent flavin oxidoreductase iliE (401 aa).

Residues 25–28 (ASMS) and Gln-107 each bind FMN. Position 188–191 (188–191 (HAAH)) interacts with substrate. 346-347 (AR) provides a ligand contact to FMN.

Belongs to the NADH:flavin oxidoreductase/NADH oxidase family.

Its function is as follows. NADH-dependent flavin oxidoreductase; part of the gene cluster that mediates the biosynthesis of ilicicolin H, a 4-hydroxy-2-pyridonealkaloid that has potent and broad antifungal activities by inhibiting the mitochondrial respiration chain. The biosynthesis of ilicicolin H starts with formation of the tetramic acid by the hybrid PKS-NRPS synthetase iliA with the partnering trans-enoyl reductase iliB since iliA lacks a designated enoylreductase (ER) domain. The cytochrome P450 monooxygenase iliC then catalyzes the ring expansion of the tetramate to the acyclic 2-pyridone. The pericyclase iliD further converts the acyclic 2-pyridone into 8-epi-ilicicolin H. 8-epi-ilicicolin H might then spontaneously convert to ilicicolin H since ilicicolin H is produced in the absence of the epimerase iliE, in contrast to what was observed for the Talaromyces variabilis ilicolin H biosynthetic pathway. The polypeptide is NADH-dependent flavin oxidoreductase iliE (Hypocrea jecorina (strain QM6a) (Trichoderma reesei)).